Reading from the N-terminus, the 285-residue chain is Bifunctional protein FolD (285 aa).

NADP(+) is bound by residues Gly-166–Ser-168, Ser-191, and Ile-232.

Belongs to the tetrahydrofolate dehydrogenase/cyclohydrolase family. In terms of assembly, homodimer.

It catalyses the reaction (6R)-5,10-methylene-5,6,7,8-tetrahydrofolate + NADP(+) = (6R)-5,10-methenyltetrahydrofolate + NADPH. The enzyme catalyses (6R)-5,10-methenyltetrahydrofolate + H2O = (6R)-10-formyltetrahydrofolate + H(+). It functions in the pathway one-carbon metabolism; tetrahydrofolate interconversion. Functionally, catalyzes the oxidation of 5,10-methylenetetrahydrofolate to 5,10-methenyltetrahydrofolate and then the hydrolysis of 5,10-methenyltetrahydrofolate to 10-formyltetrahydrofolate. The sequence is that of Bifunctional protein FolD from Actinobacillus pleuropneumoniae serotype 7 (strain AP76).